The sequence spans 540 residues: Chaperonin GroEL (540 aa).

ATP-binding positions include 29-32 (TLGP), 86-90 (DGTTT), G413, 477-479 (DAL), and D493.

The protein belongs to the chaperonin (HSP60) family. Forms a cylinder of 14 subunits composed of two heptameric rings stacked back-to-back. Interacts with the co-chaperonin GroES.

Its subcellular location is the cytoplasm. It carries out the reaction ATP + H2O + a folded polypeptide = ADP + phosphate + an unfolded polypeptide.. Its function is as follows. Together with its co-chaperonin GroES, plays an essential role in assisting protein folding. The GroEL-GroES system forms a nano-cage that allows encapsulation of the non-native substrate proteins and provides a physical environment optimized to promote and accelerate protein folding. The protein is Chaperonin GroEL of Clostridium botulinum (strain Alaska E43 / Type E3).